A 290-amino-acid chain; its full sequence is Arylamine N-acetyltransferase 2 (290 aa).

Cys68 serves as the catalytic Acyl-thioester intermediate. CoA-binding residues include Ser103 and Gly104. 106–107 (IH) contacts substrate. Residues His107 and Asp122 contribute to the active site. Residue Tyr208 coordinates CoA.

The protein belongs to the arylamine N-acetyltransferase family.

The protein localises to the cytoplasm. The enzyme catalyses an arylamine + acetyl-CoA = an N-acetylarylamine + CoA. It catalyses the reaction an N-hydroxyarylamine + acetyl-CoA = an N-acetoxyarylamine + CoA. Its function is as follows. Catalyzes the N- or O-acetylation of various arylamine and heterocyclic amine substrates, and participates in the detoxification of a plethora of hydrazine and arylamine drugs. The chain is Arylamine N-acetyltransferase 2 (Nat2) from Mus musculus (Mouse).